A 122-amino-acid chain; its full sequence is Large ribosomal subunit protein bL12 (122 aa).

Belongs to the bacterial ribosomal protein bL12 family. As to quaternary structure, homodimer. Part of the ribosomal stalk of the 50S ribosomal subunit. Forms a multimeric L10(L12)X complex, where L10 forms an elongated spine to which 2 to 4 L12 dimers bind in a sequential fashion. Binds GTP-bound translation factors.

Functionally, forms part of the ribosomal stalk which helps the ribosome interact with GTP-bound translation factors. Is thus essential for accurate translation. The sequence is that of Large ribosomal subunit protein bL12 from Pseudomonas aeruginosa (strain LESB58).